We begin with the raw amino-acid sequence, 327 residues long: Ribonucleoside-diphosphate reductase small chain (327 aa).

The Fe cation site is built by Asp-70, Glu-101, and His-104. Tyr-108 is an active-site residue. Fe cation is bound by residues Glu-164, Glu-198, and His-201.

The protein belongs to the ribonucleoside diphosphate reductase small chain family. In terms of assembly, heterotetramer composed of a homodimer of the large subunit (R1) and a homodimer of the small subunit (R2). Larger multisubunit protein complex are also active, composed of (R1)n(R2)n. It depends on Fe cation as a cofactor.

The catalysed reaction is a 2'-deoxyribonucleoside 5'-diphosphate + [thioredoxin]-disulfide + H2O = a ribonucleoside 5'-diphosphate + [thioredoxin]-dithiol. Ribonucleoside-diphosphate reductase holoenzyme provides the precursors necessary for viral DNA synthesis. Allows virus growth in non-dividing cells. Catalyzes the biosynthesis of deoxyribonucleotides from the corresponding ribonucleotides. In African swine fever virus (isolate Tick/Malawi/Lil 20-1/1983) (ASFV), this protein is Ribonucleoside-diphosphate reductase small chain.